Here is a 950-residue protein sequence, read N- to C-terminus: 2-oxoglutarate dehydrogenase E1 component (950 aa).

Belongs to the alpha-ketoglutarate dehydrogenase family. As to quaternary structure, homodimer. Part of the 2-oxoglutarate dehydrogenase (OGDH) complex composed of E1 (2-oxoglutarate dehydrogenase), E2 (dihydrolipoamide succinyltransferase) and E3 (dihydrolipoamide dehydrogenase); the complex contains multiple copies of the three enzymatic components (E1, E2 and E3). The cofactor is thiamine diphosphate.

The enzyme catalyses N(6)-[(R)-lipoyl]-L-lysyl-[protein] + 2-oxoglutarate + H(+) = N(6)-[(R)-S(8)-succinyldihydrolipoyl]-L-lysyl-[protein] + CO2. E1 component of the 2-oxoglutarate dehydrogenase (OGDH) complex which catalyzes the decarboxylation of 2-oxoglutarate, the first step in the conversion of 2-oxoglutarate to succinyl-CoA and CO(2). The sequence is that of 2-oxoglutarate dehydrogenase E1 component (odhA) from Cupriavidus necator (strain ATCC 17699 / DSM 428 / KCTC 22496 / NCIMB 10442 / H16 / Stanier 337) (Ralstonia eutropha).